Reading from the N-terminus, the 627-residue chain is Glucokinase regulatory protein (627 aa).

2 SIS domains span residues 90–286 (VQEV…QGVV) and 320–499 (VGIS…LLGK). Beta-D-fructose 1-phosphate-binding positions include 109 to 110 (TS), Glu153, and 179 to 181 (SVG). 109 to 110 (TS) is a beta-D-fructose 6-phosphate binding site. 179–181 (SVG) provides a ligand contact to beta-D-fructose 6-phosphate. Residues 199 to 200 (AV) are important for interaction with GCK. Glu348 contributes to the beta-D-fructose 1-phosphate binding site. Residues 463–465 (LLF) form an essential for interaction with GCK region. A beta-D-fructose 1-phosphate-binding site is contributed by Lys514. Lys514 is a beta-D-fructose 6-phosphate binding site.

Belongs to the GCKR family. As to quaternary structure, interacts (fructose 6-phosphate bound form) with GCK. As to expression, detected in liver (at protein level). Not detected in muscle, brain, heart, testis, intestine or spleen.

It is found in the cytoplasm. The protein localises to the nucleus. Its subcellular location is the mitochondrion. Its function is as follows. Regulates glucokinase (GCK) by forming an inactive complex with this enzyme. Acts by promoting GCK recruitment to the nucleus, possibly to provide a reserve of GCK that can be quickly released in the cytoplasm after a meal. The affinity of GCKR for GCK is modulated by fructose metabolites: GCKR with bound fructose 6-phosphate has increased affinity for GCK, while GCKR with bound fructose 1-phosphate has strongly decreased affinity for GCK and does not inhibit GCK activity. The polypeptide is Glucokinase regulatory protein (Rattus norvegicus (Rat)).